The primary structure comprises 319 residues: Ribosomal RNA large subunit methyltransferase F (319 aa).

Belongs to the methyltransferase superfamily. METTL16/RlmF family.

It is found in the cytoplasm. The enzyme catalyses adenosine(1618) in 23S rRNA + S-adenosyl-L-methionine = N(6)-methyladenosine(1618) in 23S rRNA + S-adenosyl-L-homocysteine + H(+). In terms of biological role, specifically methylates the adenine in position 1618 of 23S rRNA. This is Ribosomal RNA large subunit methyltransferase F from Aliivibrio fischeri (strain ATCC 700601 / ES114) (Vibrio fischeri).